A 264-amino-acid polypeptide reads, in one-letter code: Proteasome subunit beta type-4 (264 aa).

Methionine 1 is subject to N-acetylmethionine. Residues 1 to 45 (MEAFLGSRSGLWAGGPAPGQFYRIPSTPDSFMDPASALYRGPITR) constitute a propeptide that is removed on maturation. A Phosphoserine modification is found at serine 26. Tyrosine 102 is modified (phosphotyrosine).

It belongs to the peptidase T1B family. In terms of assembly, the 26S proteasome consists of a 20S proteasome core and two 19S regulatory subunits. The 20S proteasome core is a barrel-shaped complex made of 28 subunits that are arranged in four stacked rings. The two outer rings are each formed by seven alpha subunits, and the two inner rings are formed by seven beta subunits. The proteolytic activity is exerted by three beta-subunits PSMB5, PSMB6 and PSMB7. Forms a ternary complex with SMAD1 and OAZ1 before PSMB4 is incorporated into the 20S proteasome. Interacts with PRPF19. As to quaternary structure, (Microbial infection) Interacts with HTLV-1 Tax protein. (Microbial infection) Interacts with HIV-1 Nef and Tat proteins.

Its subcellular location is the cytoplasm. The protein resides in the nucleus. Functionally, non-catalytic component of the 20S core proteasome complex involved in the proteolytic degradation of most intracellular proteins. This complex plays numerous essential roles within the cell by associating with different regulatory particles. Associated with two 19S regulatory particles, forms the 26S proteasome and thus participates in the ATP-dependent degradation of ubiquitinated proteins. The 26S proteasome plays a key role in the maintenance of protein homeostasis by removing misfolded or damaged proteins that could impair cellular functions, and by removing proteins whose functions are no longer required. Associated with the PA200 or PA28, the 20S proteasome mediates ubiquitin-independent protein degradation. This type of proteolysis is required in several pathways including spermatogenesis (20S-PA200 complex) or generation of a subset of MHC class I-presented antigenic peptides (20S-PA28 complex). SMAD1/OAZ1/PSMB4 complex mediates the degradation of the CREBBP/EP300 repressor SNIP1. The polypeptide is Proteasome subunit beta type-4 (Homo sapiens (Human)).